The primary structure comprises 247 residues: Uridylate kinase (247 aa).

Residue 16-19 (KLSG) participates in ATP binding. G58 contacts UMP. ATP-binding residues include G59 and R63. Residues D78 and 139 to 146 (TGNPFFTT) contribute to the UMP site. Residues T166, Y172, and D175 each coordinate ATP.

Belongs to the UMP kinase family. Homohexamer.

It is found in the cytoplasm. The catalysed reaction is UMP + ATP = UDP + ADP. The protein operates within pyrimidine metabolism; CTP biosynthesis via de novo pathway; UDP from UMP (UMPK route): step 1/1. With respect to regulation, inhibited by UTP. In terms of biological role, catalyzes the reversible phosphorylation of UMP to UDP. This is Uridylate kinase from Xylella fastidiosa (strain Temecula1 / ATCC 700964).